A 344-amino-acid polypeptide reads, in one-letter code: Lipase chaperone (344 aa).

A helical transmembrane segment spans residues 14-34; it reads AVVYGVVGLAAIAGVAMWSGA.

This sequence belongs to the lipase chaperone family.

It localises to the cell inner membrane. May be involved in the folding of the extracellular lipase during its passage through the periplasm. In Burkholderia cepacia (Pseudomonas cepacia), this protein is Lipase chaperone (lifO).